The chain runs to 82 residues: Small ribosomal subunit protein bS16 (82 aa).

Belongs to the bacterial ribosomal protein bS16 family.

The sequence is that of Small ribosomal subunit protein bS16 from Sodalis glossinidius (strain morsitans).